A 173-amino-acid chain; its full sequence is Pyridoxal 5'-phosphate synthase subunit PdxT (173 aa).

49–51 is a binding site for L-glutamine; that stretch reads GES. Catalysis depends on Cys81, which acts as the Nucleophile. L-glutamine-binding positions include Arg113 and 141 to 142; that span reads IR.

It belongs to the glutaminase PdxT/SNO family. In terms of assembly, in the presence of PdxS, forms a dodecamer of heterodimers. Only shows activity in the heterodimer.

The enzyme catalyses aldehydo-D-ribose 5-phosphate + D-glyceraldehyde 3-phosphate + L-glutamine = pyridoxal 5'-phosphate + L-glutamate + phosphate + 3 H2O + H(+). The catalysed reaction is L-glutamine + H2O = L-glutamate + NH4(+). Its pathway is cofactor biosynthesis; pyridoxal 5'-phosphate biosynthesis. In terms of biological role, catalyzes the hydrolysis of glutamine to glutamate and ammonia as part of the biosynthesis of pyridoxal 5'-phosphate. The resulting ammonia molecule is channeled to the active site of PdxS. The polypeptide is Pyridoxal 5'-phosphate synthase subunit PdxT (Mycolicibacterium paratuberculosis (strain ATCC BAA-968 / K-10) (Mycobacterium paratuberculosis)).